Reading from the N-terminus, the 319-residue chain is Lipooligosaccharide heptosyltransferase 2 (319 aa).

The protein belongs to the glycosyltransferase 9 family.

The catalysed reaction is an L-alpha-D-Hep-(1-&gt;5)-[alpha-Kdo-(2-&gt;4)]-alpha-Kdo-(2-&gt;6)-lipid A + ADP-L-glycero-beta-D-manno-heptose = an L-alpha-D-Hep-(1-&gt;3)-L-alpha-D-Hep-(1-&gt;5)-[alpha-Kdo-(2-&gt;4)]-alpha-Kdo-(2-&gt;6)-lipid A + ADP + H(+). It participates in bacterial outer membrane biogenesis; LOS core biosynthesis. Glycosyltransferase involved in the biosynthesis of the core oligosaccharide region of lipooligosaccharide (LOS). Catalyzes the addition of the second heptose unit to the heptosyl-Kdo2-lipid A module. In Campylobacter jejuni subsp. jejuni serotype O:2 (strain ATCC 700819 / NCTC 11168), this protein is Lipooligosaccharide heptosyltransferase 2.